The following is a 225-amino-acid chain: Iron-sulfur flavoprotein CD630_04720 (225 aa).

Residues cysteine 49, cysteine 52, cysteine 55, and cysteine 61 each contribute to the [4Fe-4S] cluster site.

It belongs to the SsuE family. Isf subfamily. As to quaternary structure, homodimer. FMN is required as a cofactor. It depends on [4Fe-4S] cluster as a cofactor.

Its function is as follows. Redox-active protein probably involved in electron transport. This chain is Iron-sulfur flavoprotein CD630_04720, found in Clostridioides difficile (strain 630) (Peptoclostridium difficile).